A 295-amino-acid chain; its full sequence is Bifunctional protein FolD (295 aa).

Residues 166–168 (GRS), Ser191, and Ile232 each bind NADP(+).

The protein belongs to the tetrahydrofolate dehydrogenase/cyclohydrolase family. Homodimer.

The enzyme catalyses (6R)-5,10-methylene-5,6,7,8-tetrahydrofolate + NADP(+) = (6R)-5,10-methenyltetrahydrofolate + NADPH. The catalysed reaction is (6R)-5,10-methenyltetrahydrofolate + H2O = (6R)-10-formyltetrahydrofolate + H(+). The protein operates within one-carbon metabolism; tetrahydrofolate interconversion. Functionally, catalyzes the oxidation of 5,10-methylenetetrahydrofolate to 5,10-methenyltetrahydrofolate and then the hydrolysis of 5,10-methenyltetrahydrofolate to 10-formyltetrahydrofolate. The chain is Bifunctional protein FolD from Wolbachia pipientis subsp. Culex pipiens (strain wPip).